Reading from the N-terminus, the 349-residue chain is Farnesyl pyrophosphate synthase (349 aa).

Isopentenyl diphosphate contacts are provided by K48, R51, and Q90. Mg(2+) is bound by residues D97 and D101. R106 lines the dimethylallyl diphosphate pocket. R107 contacts isopentenyl diphosphate. Positions 194, 195, 234, 251, and 260 each coordinate dimethylallyl diphosphate.

It belongs to the FPP/GGPP synthase family. Mg(2+) is required as a cofactor.

Its subcellular location is the cytoplasm. It carries out the reaction isopentenyl diphosphate + dimethylallyl diphosphate = (2E)-geranyl diphosphate + diphosphate. The enzyme catalyses isopentenyl diphosphate + (2E)-geranyl diphosphate = (2E,6E)-farnesyl diphosphate + diphosphate. It functions in the pathway isoprenoid biosynthesis; farnesyl diphosphate biosynthesis; farnesyl diphosphate from geranyl diphosphate and isopentenyl diphosphate: step 1/1. Its pathway is isoprenoid biosynthesis; geranyl diphosphate biosynthesis; geranyl diphosphate from dimethylallyl diphosphate and isopentenyl diphosphate: step 1/1. Its function is as follows. Catalyzes the sequential condensation of isopentenyl pyrophosphate with the allylic pyrophosphates, dimethylallyl pyrophosphate, and then with the resultant geranylpyrophosphate to the ultimate product farnesyl pyrophosphate. In Kluyveromyces lactis (strain ATCC 8585 / CBS 2359 / DSM 70799 / NBRC 1267 / NRRL Y-1140 / WM37) (Yeast), this protein is Farnesyl pyrophosphate synthase (FPS1).